A 116-amino-acid chain; its full sequence is Aspartate 1-decarboxylase (116 aa).

Residue serine 25 is the Schiff-base intermediate with substrate; via pyruvic acid of the active site. Serine 25 is subject to Pyruvic acid (Ser). Threonine 57 contacts substrate. Catalysis depends on tyrosine 58, which acts as the Proton donor. A substrate-binding site is contributed by glycine 73–alanine 75.

This sequence belongs to the PanD family. Heterooctamer of four alpha and four beta subunits. Pyruvate serves as cofactor. In terms of processing, is synthesized initially as an inactive proenzyme, which is activated by self-cleavage at a specific serine bond to produce a beta-subunit with a hydroxyl group at its C-terminus and an alpha-subunit with a pyruvoyl group at its N-terminus.

It localises to the cytoplasm. The catalysed reaction is L-aspartate + H(+) = beta-alanine + CO2. The protein operates within cofactor biosynthesis; (R)-pantothenate biosynthesis; beta-alanine from L-aspartate: step 1/1. Its function is as follows. Catalyzes the pyruvoyl-dependent decarboxylation of aspartate to produce beta-alanine. The protein is Aspartate 1-decarboxylase of Parabacteroides distasonis (strain ATCC 8503 / DSM 20701 / CIP 104284 / JCM 5825 / NCTC 11152).